A 61-amino-acid chain; its full sequence is Statherin (61 aa).

Residues 1–19 (MXFLXFXLXLLXMXXMXXX) form the signal peptide. Residues 20–25 (DSSEEK) are hydroxyapatite-binding; inhibits crystal growth. 2 positions are modified to phosphoserine: Ser21 and Ser22. The interval 37–61 (RYGPYQPFAPQPLYPQPYQPYQPQY) is disordered. The tract at residues 37-61 (RYGPYQPFAPQPLYPQPYQPYQPQY) is hydrophobic; inhibits precipitation of calcium phosphate salts. A compositionally biased stretch (pro residues) spans 43–61 (PFAPQPLYPQPYQPYQPQY).

This sequence belongs to the histatin/statherin family. As to expression, secreted by parotid and submandibular glands.

The protein resides in the secreted. Functionally, salivary protein that stabilizes saliva supersaturated with calcium salts by inhibiting the precipitation of calcium phosphate salts. It also modulates hydroxyapatite crystal formation on the tooth surface. The sequence is that of Statherin (STATH) from Macaca fascicularis (Crab-eating macaque).